We begin with the raw amino-acid sequence, 243 residues long: Type III pantothenate kinase (243 aa).

6–13 (DIGNTVAK) is an ATP binding site. Residues tyrosine 86 and 93–96 (GYDR) each bind substrate. The active-site Proton acceptor is the aspartate 95. Aspartate 116 contributes to the K(+) binding site. Residue threonine 119 participates in ATP binding. A substrate-binding site is contributed by threonine 171.

It belongs to the type III pantothenate kinase family. As to quaternary structure, homodimer. NH4(+) serves as cofactor. K(+) is required as a cofactor.

Its subcellular location is the cytoplasm. It carries out the reaction (R)-pantothenate + ATP = (R)-4'-phosphopantothenate + ADP + H(+). Its pathway is cofactor biosynthesis; coenzyme A biosynthesis; CoA from (R)-pantothenate: step 1/5. Catalyzes the phosphorylation of pantothenate (Pan), the first step in CoA biosynthesis. In Bacteroides fragilis (strain ATCC 25285 / DSM 2151 / CCUG 4856 / JCM 11019 / LMG 10263 / NCTC 9343 / Onslow / VPI 2553 / EN-2), this protein is Type III pantothenate kinase.